Consider the following 392-residue polypeptide: ABSCISIC ACID-INSENSITIVE 5-like protein 4 (392 aa).

The disordered stretch occupies residues 1 to 22; the sequence is MGTHIDINNLGGDTSRGNESKP. 3 positions are modified to phosphoserine: S28, S50, and S96. T135 bears the Phosphothreonine mark. The interval 266–297 is disordered; sequence NMGGAGGTVTATSPGTSSAENNTWSSPVPYVF. Over residues 274 to 291 the composition is skewed to polar residues; that stretch reads VTATSPGTSSAENNTWSS. The bZIP domain maps to 311–374; sequence VERRQKRMIK…NSELKEFSKQ (64 aa). A basic motif region spans residues 313 to 332; sequence RRQKRMIKNRESAARSRARK. The interval 339–360 is leucine-zipper; sequence LEAEIESLKLVNQDLQKKQAEI.

This sequence belongs to the bZIP family. ABI5 subfamily. As to quaternary structure, DNA-binding heterodimer. Interacts with ABI3 and the AFP proteins AFP1, AFP2, AFP3 and AFP4. Post-translationally, phosphorylated by CPK4, CPK11, SRK2D and SRK2I in vitro.

The protein resides in the nucleus. Functionally, binds to the ABA-responsive element (ABRE). Could participate in abscisic acid-regulated gene expression. This is ABSCISIC ACID-INSENSITIVE 5-like protein 4 (ABF1) from Arabidopsis thaliana (Mouse-ear cress).